The sequence spans 571 residues: Urease subunit alpha (571 aa).

The Urease domain maps to 133–571; the sequence is GGIDTHIHFI…LPLAQRYFLF (439 aa). Positions 138, 140, and 221 each coordinate Ni(2+). N6-carboxylysine is present on K221. Position 223 (H223) interacts with substrate. Ni(2+) contacts are provided by H250 and H276. The Proton donor role is filled by H324. D364 lines the Ni(2+) pocket.

Belongs to the metallo-dependent hydrolases superfamily. Urease alpha subunit family. In terms of assembly, heterotrimer of UreA (gamma), UreB (beta) and UreC (alpha) subunits. Three heterotrimers associate to form the active enzyme. Ni cation is required as a cofactor. Post-translationally, carboxylation allows a single lysine to coordinate two nickel ions.

Its subcellular location is the cytoplasm. The catalysed reaction is urea + 2 H2O + H(+) = hydrogencarbonate + 2 NH4(+). It functions in the pathway nitrogen metabolism; urea degradation; CO(2) and NH(3) from urea (urease route): step 1/1. This Corynebacterium efficiens (strain DSM 44549 / YS-314 / AJ 12310 / JCM 11189 / NBRC 100395) protein is Urease subunit alpha.